The chain runs to 489 residues: Bypass of stop codon protein 5 (489 aa).

Residues 1-42 (MQESKEPQNKFEGCQRISSSSSTLFGGTSFEEPRCGTSQGKE) are disordered. Positions 18–30 (SSSSSTLFGGTSF) are enriched in low complexity. Residues S111 and S350 each carry the phosphoserine modification.

It belongs to the BUL1 family.

In terms of biological role, appears to play a role in translation fidelity, and may act when translation is compromised. May be a component of the ubiquitination pathway. This Saccharomyces cerevisiae (strain ATCC 204508 / S288c) (Baker's yeast) protein is Bypass of stop codon protein 5 (BSC5).